The chain runs to 222 residues: Isoprenyl transferase (222 aa).

The active site involves Asp12. Position 12 (Asp12) interacts with Mg(2+). Residues 13–16 (GNRR), Trp17, and 57–59 (STE) contribute to the substrate site. Catalysis depends on Asn60, which acts as the Proton acceptor. Substrate is bound by residues Trp61, Arg63, Arg171, and 177-179 (RLS). Glu190 contacts Mg(2+).

Belongs to the UPP synthase family. In terms of assembly, homodimer. Mg(2+) serves as cofactor.

Its function is as follows. Catalyzes the condensation of isopentenyl diphosphate (IPP) with allylic pyrophosphates generating different type of terpenoids. In Campylobacter jejuni subsp. jejuni serotype O:2 (strain ATCC 700819 / NCTC 11168), this protein is Isoprenyl transferase (uppS).